A 581-amino-acid polypeptide reads, in one-letter code: Tetratricopeptide repeat and J domain-containing co-chaperone DNJ1 (581 aa).

A signal peptide spans 1 to 19 (MKATLLPSLLALSLTLCLA). TPR repeat units follow at residues 48 to 81 (ASQH…DPSS), 82 to 115 (WLTY…NPKF), 116 to 149 (DKAY…RAEK), 221 to 254 (LETR…TPSP), 257 to 293 (LRRL…DPDN), 378 to 411 (LELH…DPDN), and 412 to 445 (VEAT…SGRT). Residue asparagine 293 is glycosylated (N-linked (GlcNAc...) asparagine). Residues 467–528 (DYYKVLGVKR…ELRKKYDQGD (62 aa)) enclose the J domain. A disordered region spans residues 522–544 (KKYDQGDDPNDPMGGQQGGYGNP).

In terms of assembly, interacts with the ER chaperone BIP1.

Its subcellular location is the endoplasmic reticulum lumen. Functionally, endoplasmic reticulum (ER) protein that functions as a co-chaperone for BIP1 during ER stress. Might be specifically involved in the refolding of N-glycosylated proteins. The polypeptide is Tetratricopeptide repeat and J domain-containing co-chaperone DNJ1 (Mycosarcoma maydis (Corn smut fungus)).